Reading from the N-terminus, the 223-residue chain is Ribonuclease T (223 aa).

An Exonuclease domain is found at 20-194 (VVIDVETAGF…YDTERTAELF (175 aa)). Asp-23, Glu-25, His-181, and Asp-186 together coordinate Mg(2+). Catalysis depends on His-181, which acts as the Proton donor/acceptor.

Belongs to the RNase T family. As to quaternary structure, homodimer. It depends on Mg(2+) as a cofactor.

Its function is as follows. Trims short 3' overhangs of a variety of RNA species, leaving a one or two nucleotide 3' overhang. Responsible for the end-turnover of tRNA: specifically removes the terminal AMP residue from uncharged tRNA (tRNA-C-C-A). Also appears to be involved in tRNA biosynthesis. This is Ribonuclease T from Shewanella baltica (strain OS155 / ATCC BAA-1091).